Consider the following 347-residue polypeptide: Probable arabinogalactan endo-beta-1,4-galactanase A (347 aa).

The N-terminal stretch at 1–16 (MLFSYLLATLPLLANA) is a signal peptide. Glu150 (proton donor) is an active-site residue. Glu260 acts as the Nucleophile in catalysis.

The protein belongs to the glycosyl hydrolase 53 family.

The protein localises to the secreted. It catalyses the reaction The enzyme specifically hydrolyzes (1-&gt;4)-beta-D-galactosidic linkages in type I arabinogalactans.. In terms of biological role, endogalactanase involved in the degradation of plant cell wall polysaccharides, and more particularly of hairy regions of pectin. The polypeptide is Probable arabinogalactan endo-beta-1,4-galactanase A (galA) (Aspergillus oryzae (strain ATCC 42149 / RIB 40) (Yellow koji mold)).